A 354-amino-acid polypeptide reads, in one-letter code: Guanine nucleotide-binding protein G(o) subunit alpha (354 aa).

A lipid anchor (N-myristoyl glycine) is attached at G2. The S-palmitoyl cysteine moiety is linked to residue C3. Residues 32 to 354 (KDVKLLLLGA…AYNLRGCGLY (323 aa)) form the G-alpha domain. The segment at 35–48 (KLLLLGAGESGKST) is G1 motif. GTP-binding residues include E43, K46, S47, T48, S152, L176, R177, T178, and R179. S47 contributes to the Mg(2+) binding site. Residues 174 to 182 (DILRTRVKT) are G2 motif. T182 is a binding site for Mg(2+). Residues 197–206 (FRLFDVGGQR) form a G3 motif region. The interval 266-273 (ILFLNKKD) is G4 motif. N270, D273, and C325 together coordinate GTP. Residues 324–329 (TCATDT) are G5 motif.

Belongs to the G-alpha family. G(i/o/t/z) subfamily. G proteins are composed of 3 units; alpha, beta and gamma.

It carries out the reaction GTP + H2O = GDP + phosphate + H(+). Functionally, guanine nucleotide-binding proteins (G proteins) function as transducers downstream of G protein-coupled receptors (GPCRs) in numerous signaling cascades. The alpha chain contains the guanine nucleotide binding site and alternates between an active, GTP-bound state and an inactive, GDP-bound state. Signaling by an activated GPCR promotes GDP release and GTP binding. The alpha subunit has a low GTPase activity that converts bound GTP to GDP, thereby terminating the signal. Both GDP release and GTP hydrolysis are modulated by numerous regulatory proteins. Signaling is mediated via effector proteins, such as adenylate cyclase. Inhibits adenylate cyclase activity, leading to decreased intracellular cAMP levels. The protein is Guanine nucleotide-binding protein G(o) subunit alpha (gna0) of Xenopus laevis (African clawed frog).